We begin with the raw amino-acid sequence, 377 residues long: MSRGIVIIGSGFAARQLVKNIRKQDATVALTLIAADSMDEYNKPDLSHVISQAQRADDLTRQSAGEFAEQFNLRLFPHTWITDIDADAHVVKSQDKQWQFDKLVLATGASAFVPPVAGRELMLTLNSQQEYRACETQLRDAQRVLIVGGGLIGSELAMDFCRAGKAVTLIDNAASILASLMPPEVSSRLQHRLTDMGVHLLLKSQLQGLEKTATGIRATLDRDRQVEVDAVIAATGLRPETALARRAGLTINRGVCVDSYLQTSHPDIYALGDCAEINGQVLPFLQPIQLSAMYLAKNLLGGNAPLKLPAMLVKIKTPELPLHLAGETQRCDLNWHIAAESEGMVARGINTEGQLCAFVVSEDRMKEAFALLKTLPA.

Belongs to the FAD-dependent oxidoreductase family. FAD serves as cofactor.

It localises to the cytoplasm. It carries out the reaction 2 reduced [nitric oxide reductase rubredoxin domain] + NAD(+) + H(+) = 2 oxidized [nitric oxide reductase rubredoxin domain] + NADH. The protein operates within nitrogen metabolism; nitric oxide reduction. One of at least two accessory proteins for anaerobic nitric oxide (NO) reductase. Reduces the rubredoxin moiety of NO reductase. The polypeptide is Nitric oxide reductase FlRd-NAD(+) reductase (Citrobacter koseri (strain ATCC BAA-895 / CDC 4225-83 / SGSC4696)).